The following is a 229-amino-acid chain: ATP synthase subunit a (229 aa).

7 helical membrane passes run Arg-24 to Cys-44, Leu-45 to Phe-65, Leu-83 to Cys-103, Phe-117 to Cys-137, Phe-143 to Phe-163, Cys-177 to Leu-199, and Leu-206 to Phe-228.

Belongs to the ATPase A chain family. In terms of assembly, F-type ATPases have 2 components, CF(1) - the catalytic core - and CF(0) - the membrane proton channel. CF(1) has five subunits: alpha(3), beta(3), gamma(1), delta(1), epsilon(1). CF(0) has three main subunits: a, b and c.

The protein resides in the mitochondrion inner membrane. Mitochondrial membrane ATP synthase (F(1)F(0) ATP synthase or Complex V) produces ATP from ADP in the presence of a proton gradient across the membrane which is generated by electron transport complexes of the respiratory chain. F-type ATPases consist of two structural domains, F(1) - containing the extramembraneous catalytic core and F(0) - containing the membrane proton channel, linked together by a central stalk and a peripheral stalk. During catalysis, ATP synthesis in the catalytic domain of F(1) is coupled via a rotary mechanism of the central stalk subunits to proton translocation. Key component of the proton channel; it may play a direct role in the translocation of protons across the membrane. The chain is ATP synthase subunit a (ATP6) from Trypanosoma brucei brucei.